The following is a 506-amino-acid chain: Gamma-aminobutyric acid receptor subunit epsilon (506 aa).

Residues 1–17 (MLPKVLLMLLNMFLALQ) form the signal peptide. Topologically, residues 18-277 (WRVGPHIKLE…MTFFFNVSRR (260 aa)) are extracellular. The interval 32–65 (AQDKVVFGPQPQPSGKKLPARETELTADHTTERP) is disordered. A compositionally biased stretch (basic and acidic residues) spans 50–65 (PARETELTADHTTERP). Residue N135 is glycosylated (N-linked (GlcNAc...) asparagine). C196 and C210 are oxidised to a cystine. An N-linked (GlcNAc...) asparagine glycan is attached at N253. Residues 278–298 (FGFIVFQNYIPSSVTTMLSWV) traverse the membrane as a helical segment. Over 299 to 308 (SFWIKIEAAA) the chain is Cytoplasmic. Residues 309 to 328 (ARASVGVSSVLTMATLGTFS) traverse the membrane as a helical segment. Over 329–344 (RKNFPRVSYLTALDFY) the chain is Extracellular. A helical transmembrane segment spans residues 345–365 (IAICFVLCFCTLLEFTVLNFL). Residues 366–485 (TYNNIERQAS…HVYRLDNYSR (120 aa)) lie on the Cytoplasmic side of the membrane. A helical transmembrane segment spans residues 486 to 506 (VLFPITFFFFNVVYWVICLNL).

Belongs to the ligand-gated ion channel (TC 1.A.9) family. Gamma-aminobutyric acid receptor (TC 1.A.9.5) subfamily. GABRE sub-subfamily. In terms of assembly, heteropentamer, formed by a combination of alpha (GABRA1-6), beta (GABRB1-3), gamma (GABRG1-3), delta (GABRD), epsilon (GABRE), rho (GABRR1-3), pi (GABRP) and theta (GABRQ) chains, each subunit exhibiting distinct physiological and pharmacological properties. In terms of tissue distribution, expressed in brain and heart. Strongly expressed in locus ceruleus from the first postnatal day. Weakly expressed in other brainstem nuclei and in the hypothalamus. Found in the cerebral cortex of pups.

It localises to the cell membrane. Its subcellular location is the postsynaptic cell membrane. It carries out the reaction chloride(in) = chloride(out). Its function is as follows. Epsilon subunit of the heteropentameric ligand-gated chloride channel gated by gamma-aminobutyric acid (GABA), a major inhibitory neurotransmitter in the brain. GABA-gated chloride channels, also named GABA(A) receptors (GABAAR), consist of five subunits arranged around a central pore and contain GABA active binding site(s) located at the alpha and beta subunit interfaces. When activated by GABA, GABAARs selectively allow the flow of chloride anions across the cell membrane down their electrochemical gradient. GABARs containing epsilon subunit may also permit spontaneous chloride channel activity while preserving the structural information required for GABA-gated openings. GABARs containing epsilon subunit may regulate cardiac function. This is Gamma-aminobutyric acid receptor subunit epsilon from Rattus norvegicus (Rat).